Here is a 107-residue protein sequence, read N- to C-terminus: MTKSELVAQLATRFPQLVLKDADFAVKTMLDAMSDALANGHRIEIRGFGSFGLNRRPSRVGRNPKSGEKVLVPEKHVPHFKPGKELRERVDRNAGEPLKADAADDDL.

Positions 56 to 107 (RPSRVGRNPKSGEKVLVPEKHVPHFKPGKELRERVDRNAGEPLKADAADDDL) are disordered. Residues 65–107 (KSGEKVLVPEKHVPHFKPGKELRERVDRNAGEPLKADAADDDL) show a composition bias toward basic and acidic residues.

It belongs to the bacterial histone-like protein family. Heterodimer of an alpha and a beta chain.

This protein is one of the two subunits of integration host factor, a specific DNA-binding protein that functions in genetic recombination as well as in transcriptional and translational control. This Paraburkholderia phymatum (strain DSM 17167 / CIP 108236 / LMG 21445 / STM815) (Burkholderia phymatum) protein is Integration host factor subunit beta.